A 257-amino-acid chain; its full sequence is Putative phosphatase YkrA (257 aa).

Asp-9 serves as the catalytic Nucleophile. Asp-9 serves as a coordination point for Mg(2+). Ile-10 lines the phosphate pocket. Asp-11 is a Mg(2+) binding site. Phosphate-binding positions include 43-44 and Lys-183; that span reads SG. Asp-206 contacts Mg(2+). Residue Asn-209 coordinates phosphate.

Belongs to the HAD-like hydrolase superfamily. Cof family. The cofactor is Mg(2+).

The sequence is that of Putative phosphatase YkrA (ykrA) from Bacillus subtilis (strain 168).